The following is a 424-amino-acid chain: Ornithine aminotransferase (424 aa).

N6-(pyridoxal phosphate)lysine is present on Lys-272. A Glycyl lysine isopeptide (Lys-Gly) (interchain with G-Cter in ubiquitin) cross-link involves residue Lys-390.

It belongs to the class-III pyridoxal-phosphate-dependent aminotransferase family. Pyridoxal 5'-phosphate serves as cofactor.

It localises to the cytoplasm. The enzyme catalyses a 2-oxocarboxylate + L-ornithine = L-glutamate 5-semialdehyde + an L-alpha-amino acid. It participates in amino-acid biosynthesis; L-proline biosynthesis; L-glutamate 5-semialdehyde from L-ornithine: step 1/1. With respect to regulation, by arginine and urea. Functionally, catalyzes the transamination of ornithine into L-glutamate gamma-semialdehyde, the second step of arginine degradation. The sequence is that of Ornithine aminotransferase (CAR2) from Saccharomyces cerevisiae (strain ATCC 204508 / S288c) (Baker's yeast).